Reading from the N-terminus, the 108-residue chain is UPF0102 protein Tpet_0671 (108 aa).

This sequence belongs to the UPF0102 family.

The protein is UPF0102 protein Tpet_0671 of Thermotoga petrophila (strain ATCC BAA-488 / DSM 13995 / JCM 10881 / RKU-1).